The primary structure comprises 727 residues: Putative inactive disease susceptibility protein LOV1 (727 aa).

In terms of domain architecture, NB-ARC spans glutamate 44–aspartate 336. LRR repeat units follow at residues leucine 459 to leucine 484, isoleucine 485 to leucine 507, leucine 509 to methionine 530, methionine 575 to leucine 600, and arginine 601 to asparagine 626.

It belongs to the disease resistance NB-LRR family. RPP8/HRT subfamily.

This is Putative inactive disease susceptibility protein LOV1 (LOV1) from Arabidopsis thaliana (Mouse-ear cress).